The chain runs to 87 residues: Cytochrome c6 (87 aa).

Heme c contacts are provided by Cys14, Cys17, His18, and Met58.

Belongs to the cytochrome c family. PetJ subfamily. In terms of assembly, monomer. Post-translationally, binds 1 heme c group covalently per subunit.

Its subcellular location is the cellular thylakoid lumen. Functions as an electron carrier between membrane-bound cytochrome b6-f and photosystem I in oxygenic photosynthesis. The chain is Cytochrome c6 (petJ) from Parathermosynechococcus lividus (Thermostichus lividus).